The following is a 338-amino-acid chain: Holliday junction branch migration complex subunit RuvB (338 aa).

Positions 1-180 are large ATPase domain (RuvB-L); it reads MTRLVTPDIT…FGVISRLEFY (180 aa). ATP-binding positions include L19, R20, G61, K64, T65, T66, 127-129, R170, Y180, and R217; that span reads EDY. T65 contributes to the Mg(2+) binding site. Positions 181–251 are small ATPAse domain (RuvB-S); the sequence is TDDELTTIVT…VVDESLKLLE (71 aa). The head domain (RuvB-H) stretch occupies residues 254 to 338; sequence EKGFDHMDRT…PPSSSQGNLF (85 aa). R290, R309, and R314 together coordinate DNA.

The protein belongs to the RuvB family. In terms of assembly, homohexamer. Forms an RuvA(8)-RuvB(12)-Holliday junction (HJ) complex. HJ DNA is sandwiched between 2 RuvA tetramers; dsDNA enters through RuvA and exits via RuvB. An RuvB hexamer assembles on each DNA strand where it exits the tetramer. Each RuvB hexamer is contacted by two RuvA subunits (via domain III) on 2 adjacent RuvB subunits; this complex drives branch migration. In the full resolvosome a probable DNA-RuvA(4)-RuvB(12)-RuvC(2) complex forms which resolves the HJ.

The protein localises to the cytoplasm. It carries out the reaction ATP + H2O = ADP + phosphate + H(+). In terms of biological role, the RuvA-RuvB-RuvC complex processes Holliday junction (HJ) DNA during genetic recombination and DNA repair, while the RuvA-RuvB complex plays an important role in the rescue of blocked DNA replication forks via replication fork reversal (RFR). RuvA specifically binds to HJ cruciform DNA, conferring on it an open structure. The RuvB hexamer acts as an ATP-dependent pump, pulling dsDNA into and through the RuvAB complex. RuvB forms 2 homohexamers on either side of HJ DNA bound by 1 or 2 RuvA tetramers; 4 subunits per hexamer contact DNA at a time. Coordinated motions by a converter formed by DNA-disengaged RuvB subunits stimulates ATP hydrolysis and nucleotide exchange. Immobilization of the converter enables RuvB to convert the ATP-contained energy into a lever motion, pulling 2 nucleotides of DNA out of the RuvA tetramer per ATP hydrolyzed, thus driving DNA branch migration. The RuvB motors rotate together with the DNA substrate, which together with the progressing nucleotide cycle form the mechanistic basis for DNA recombination by continuous HJ branch migration. Branch migration allows RuvC to scan DNA until it finds its consensus sequence, where it cleaves and resolves cruciform DNA. The protein is Holliday junction branch migration complex subunit RuvB of Geobacter metallireducens (strain ATCC 53774 / DSM 7210 / GS-15).